An 84-amino-acid polypeptide reads, in one-letter code: Translational regulator CsrA (84 aa).

This sequence belongs to the CsrA/RsmA family. In terms of assembly, homodimer; the beta-strands of each monomer intercalate to form a hydrophobic core, while the alpha-helices form wings that extend away from the core.

It is found in the cytoplasm. Its function is as follows. A translational regulator that binds mRNA to regulate translation initiation and/or mRNA stability. Usually binds in the 5'-UTR at or near the Shine-Dalgarno sequence preventing ribosome-binding, thus repressing translation. Its main target seems to be the major flagellin gene, while its function is anatagonized by FliW. The chain is Translational regulator CsrA from Leptospira interrogans serogroup Icterohaemorrhagiae serovar Lai (strain 56601).